A 591-amino-acid polypeptide reads, in one-letter code: Ketol-acid reductoisomerase, chloroplastic (591 aa).

The disordered stretch occupies residues 1 to 20 (MAAATSSIAPSLSCPSPSSS). The N-terminal 52 residues, 1–52 (MAAATSSIAPSLSCPSPSSSSKTLWSSKARTLALPNIGFLSSSSKSLRSLTA), are a transit peptide targeting the chloroplast. The residue at position 53 (threonine 53) is an N-acetylthreonine. Positions 102–300 (VRGGRDLFKH…ALGSPFTFAT (199 aa)) constitute a KARI N-terminal Rossmann domain. Residues 123 to 130 (GVIGWGSQ), 156 to 161 (RKGSRS), and 195 to 199 (SDAAQ) contribute to the NADP(+) site. Residue histidine 220 is part of the active site. 2 KARI C-terminal knotted domains span residues 301–449 (TLEQ…RPAG) and 450–586 (DLGP…RPEL). 4 residues coordinate Mg(2+): aspartate 309, glutamate 313, glutamate 486, and glutamate 490. A substrate-binding site is contributed by serine 512.

This sequence belongs to the ketol-acid reductoisomerase family. In terms of assembly, homodimer. The cofactor is Mg(2+).

The protein resides in the plastid. Its subcellular location is the chloroplast. It catalyses the reaction (2R)-2,3-dihydroxy-3-methylbutanoate + NADP(+) = (2S)-2-acetolactate + NADPH + H(+). The enzyme catalyses (2R,3R)-2,3-dihydroxy-3-methylpentanoate + NADP(+) = (S)-2-ethyl-2-hydroxy-3-oxobutanoate + NADPH + H(+). The protein operates within amino-acid biosynthesis; L-isoleucine biosynthesis; L-isoleucine from 2-oxobutanoate: step 2/4. It functions in the pathway amino-acid biosynthesis; L-valine biosynthesis; L-valine from pyruvate: step 2/4. This chain is Ketol-acid reductoisomerase, chloroplastic, found in Arabidopsis thaliana (Mouse-ear cress).